Reading from the N-terminus, the 150-residue chain is Protein-export protein SecB (150 aa).

It belongs to the SecB family. As to quaternary structure, homotetramer, a dimer of dimers. One homotetramer interacts with 1 SecA dimer.

It is found in the cytoplasm. Functionally, one of the proteins required for the normal export of preproteins out of the cell cytoplasm. It is a molecular chaperone that binds to a subset of precursor proteins, maintaining them in a translocation-competent state. It also specifically binds to its receptor SecA. The protein is Protein-export protein SecB of Chromobacterium violaceum (strain ATCC 12472 / DSM 30191 / JCM 1249 / CCUG 213 / NBRC 12614 / NCIMB 9131 / NCTC 9757 / MK).